Reading from the N-terminus, the 339-residue chain is Tetraacyldisaccharide 4'-kinase (339 aa).

44-51 contacts ATP; sequence TVGGTGKT.

It belongs to the LpxK family.

It catalyses the reaction a lipid A disaccharide + ATP = a lipid IVA + ADP + H(+). It functions in the pathway glycolipid biosynthesis; lipid IV(A) biosynthesis; lipid IV(A) from (3R)-3-hydroxytetradecanoyl-[acyl-carrier-protein] and UDP-N-acetyl-alpha-D-glucosamine: step 6/6. Transfers the gamma-phosphate of ATP to the 4'-position of a tetraacyldisaccharide 1-phosphate intermediate (termed DS-1-P) to form tetraacyldisaccharide 1,4'-bis-phosphate (lipid IVA). This Bdellovibrio bacteriovorus (strain ATCC 15356 / DSM 50701 / NCIMB 9529 / HD100) protein is Tetraacyldisaccharide 4'-kinase.